The chain runs to 262 residues: Small ribosomal subunit protein eS1 (262 aa).

This sequence belongs to the eukaryotic ribosomal protein eS1 family. As to quaternary structure, component of the small ribosomal subunit. Mature ribosomes consist of a small (40S) and a large (60S) subunit. The 40S subunit contains about 33 different proteins and 1 molecule of RNA (18S). The 60S subunit contains about 49 different proteins and 3 molecules of RNA (25S, 5.8S and 5S).

It localises to the cytoplasm. The polypeptide is Small ribosomal subunit protein eS1 (Plasmodium vivax (strain Salvador I)).